A 374-amino-acid chain; its full sequence is WAT1-related protein At1g60050 (374 aa).

Helical transmembrane passes span 11–31, 42–62, 82–102, 107–127, 145–165, 194–214, 228–248, 255–275, 292–312, and 315–335; these read IVPF…TILA, FVFI…YSFY, IFLL…LGLS, IVVC…SLAL, IGTL…GPFI, WALG…WNII, VVSA…AFME, ELKL…GSII, VPLF…SFFV, and LHYG…LIMW. Residues 26-155 enclose the EamA domain; that stretch reads ALTILAKTAL…GTLICFTGAF (130 aa).

Belongs to the drug/metabolite transporter (DMT) superfamily. Plant drug/metabolite exporter (P-DME) (TC 2.A.7.4) family.

It localises to the membrane. The chain is WAT1-related protein At1g60050 from Arabidopsis thaliana (Mouse-ear cress).